The sequence spans 384 residues: Spermidine/putrescine import ATP-binding protein PotA (384 aa).

In terms of domain architecture, ABC transporter spans 6–238 (ITFNNVSKTF…PINHFVANFI (233 aa)). 40 to 47 (GASGSGKS) is a binding site for ATP.

It belongs to the ABC transporter superfamily. Spermidine/putrescine importer (TC 3.A.1.11.1) family. As to quaternary structure, the complex is composed of two ATP-binding proteins (PotA), two transmembrane proteins (PotB and PotC) and a solute-binding protein (PotD).

It is found in the cell membrane. The catalysed reaction is ATP + H2O + polyamine-[polyamine-binding protein]Side 1 = ADP + phosphate + polyamineSide 2 + [polyamine-binding protein]Side 1.. Its function is as follows. Part of the ABC transporter complex PotABCD involved in spermidine/putrescine import. Responsible for energy coupling to the transport system. The protein is Spermidine/putrescine import ATP-binding protein PotA of Streptococcus pyogenes serotype M12 (strain MGAS2096).